Reading from the N-terminus, the 79-residue chain is Gas vesicle protein A2 (79 aa).

The tract at residues 9 to 19 (LAEVLDRVLDK) is alpha helix 1. The beta-strand 1 stretch occupies residues 23 to 31 (VDVWARISL). The beta turn stretch occupies residues 32 to 34 (VGI). A beta-strand 2 region spans residues 35–43 (EILTVEARV). An alpha helix 2 region spans residues 48–67 (VDTFLHYAEEIAKIEQAELT).

Belongs to the gas vesicle GvpA family. The gas vesicle shell is 2 nm thick and consists of a single layer of this protein. It forms helical ribs nearly perpendicular to the long axis of the vesicle.

The protein resides in the gas vesicle shell. Functionally, gas vesicles are hollow, gas filled proteinaceous nanostructures found in several microbial planktonic microorganisms. They allow positioning of halobacteria at the optimal depth for growth in the poorly aerated shallow brine pools of their habitat. GvpA forms the gas vesicle shell. This protein can replace the p-gvpA gene in the p-vac locus and increases the critical collapse pressure (CCP) of hybrid gas vesicles from 0.66 MPa to 0.90 MPa. In stationary phase gas vesicles about 30 times more GvpA1 is found than GvpA2. Expression of 2 c-vac DNA fragments containing 2 divergently transcribed regions (gvpE-gvpF-gvpG-gvpH-gvpI-gvpJ-gvpK-gvpL-gvpM and gvpA-gvpC-gvpN-gvpO) allows H.volcanii to produce gas vesicles. All site-directed mutagenesis is tested in H.volcanii. The sequence is that of Gas vesicle protein A2 from Halobacterium salinarum (strain ATCC 700922 / JCM 11081 / NRC-1) (Halobacterium halobium).